The chain runs to 162 residues: Caveolin-2 (162 aa).

The Cytoplasmic segment spans residues 1–86 (MGLETEKADV…FEISKYVIYK (86 aa)). Phosphotyrosine; by SRC is present on tyrosine 19. A phosphoserine mark is found at serine 20 and serine 23. Tyrosine 27 bears the Phosphotyrosine; by SRC mark. A Phosphoserine modification is found at serine 36. The segment at residues 87 to 107 (FLTFFLAIPMAFAAGILFAIL) is an intramembrane region (helical). The Cytoplasmic segment spans residues 108 to 162 (SCLHIWIIMPFVKTCLMVLPSVQTIWKTITDVVIAPLCTSVGRSFSSISLQLSHD).

The protein belongs to the caveolin family. Monomer or homodimer. Interacts with CAV1; the interaction forms a stable heterooligomeric complex that is required for targeting to lipid rafts and for caveolae formation. Tyrosine phosphorylated forms do not form heterooligomers with the Tyr-19-phosphorylated form existing as a monomer or dimer, and the Tyr-27-form as a monomer only. Interacts (tyrosine phosphorylated form) with the SH2 domain-containing proteins, RASA1, NCK1 and SRC. Interacts (tyrosine phosphorylated form) with INSR, the interaction (Tyr-27-phosphorylated form) is increased on insulin stimulation. Interacts (Tyr-19 phosphorylated form) with MAPK1 (phosphorylated form); the interaction, promoted by insulin, leads to nuclear location and MAPK1 activation. Interacts with STAT3; the interaction is increased on insulin-induced tyrosine phosphorylation leading to STAT activation. Phosphorylated on serine and tyrosine residues. CAV1 promotes phosphorylation on Ser-23 which then targets the complex to the plasma membrane, lipid rafts and caveolae. Phosphorylation on Ser-36 appears to modulate mitosis in endothelial cells. Phosphorylation on both Tyr-19 and Tyr-27 is required for insulin-induced 'Ser-727' phosphorylation of STAT3 and its activation. Phosphorylation on Tyr-19 is required for insulin-induced phosphorylation of MAPK1 and DNA binding of STAT3. Tyrosine phosphorylation is induced by both EGF and insulin (By. similarity).

It localises to the nucleus. The protein localises to the cytoplasm. It is found in the golgi apparatus membrane. The protein resides in the cell membrane. Its subcellular location is the membrane. It localises to the caveola. In terms of biological role, may act as a scaffolding protein within caveolar membranes. Interacts directly with G-protein alpha subunits and can functionally regulate their activity. Acts as an accessory protein in conjunction with CAV1 in targeting to lipid rafts and driving caveolae formation. The Ser-36 phosphorylated form has a role in modulating mitosis in endothelial cells. Positive regulator of cellular mitogenesis of the MAPK signaling pathway. Required for the insulin-stimulated nuclear translocation and activation of MAPK1 and STAT3, and the subsequent regulation of cell cycle progression. This Mustela putorius furo (European domestic ferret) protein is Caveolin-2 (CAV2).